Here is a 360-residue protein sequence, read N- to C-terminus: Phosphoserine aminotransferase (360 aa).

An L-glutamate-binding site is contributed by Arg42. Pyridoxal 5'-phosphate contacts are provided by residues 76–77, Trp102, Thr152, Asp172, and Gln195; that span reads AS. At Lys196 the chain carries N6-(pyridoxal phosphate)lysine. Residue 237 to 238 coordinates pyridoxal 5'-phosphate; it reads NT.

It belongs to the class-V pyridoxal-phosphate-dependent aminotransferase family. SerC subfamily. Homodimer. Pyridoxal 5'-phosphate serves as cofactor.

The protein resides in the cytoplasm. The catalysed reaction is O-phospho-L-serine + 2-oxoglutarate = 3-phosphooxypyruvate + L-glutamate. It carries out the reaction 4-(phosphooxy)-L-threonine + 2-oxoglutarate = (R)-3-hydroxy-2-oxo-4-phosphooxybutanoate + L-glutamate. Its pathway is amino-acid biosynthesis; L-serine biosynthesis; L-serine from 3-phospho-D-glycerate: step 2/3. Its function is as follows. Catalyzes the reversible conversion of 3-phosphohydroxypyruvate to phosphoserine and of 3-hydroxy-2-oxo-4-phosphonooxybutanoate to phosphohydroxythreonine. This is Phosphoserine aminotransferase from Bacillus cereus (strain ATCC 14579 / DSM 31 / CCUG 7414 / JCM 2152 / NBRC 15305 / NCIMB 9373 / NCTC 2599 / NRRL B-3711).